The chain runs to 295 residues: Bis(5'-nucleosyl)-tetraphosphatase, symmetrical (295 aa).

Residues 271–295 (LSIEHPRHTHTPRRKAKKRHKRSPK) form a disordered region. Basic residues predominate over residues 277–295 (RHTHTPRRKAKKRHKRSPK).

This sequence belongs to the Ap4A hydrolase family.

The catalysed reaction is P(1),P(4)-bis(5'-adenosyl) tetraphosphate + H2O = 2 ADP + 2 H(+). Hydrolyzes diadenosine 5',5'''-P1,P4-tetraphosphate to yield ADP. This is Bis(5'-nucleosyl)-tetraphosphatase, symmetrical from Xylella fastidiosa (strain M23).